An 890-amino-acid polypeptide reads, in one-letter code: Possible lysine-specific histone demethylase 1 (890 aa).

Residues 1–13 are compositionally biased toward polar residues; it reads MKPTQFGGSSSKM. A disordered region spans residues 1–164; that stretch reads MKPTQFGGSS…TVLSGQEGAV (164 aa). Residues Ser-24 and Ser-27 each carry the phosphoserine modification. The span at 84–109 shows a compositional bias: polar residues; it reads NRPSGSGDTASNDKSGSASMGPNNQQ. Residues 110 to 122 are compositionally biased toward basic and acidic residues; sequence AERRSQSQTRKSE. Residues 123–138 show a composition bias toward low complexity; the sequence is ANATSSSVSGPSAGNS. One can recognise an SWIRM domain in the interval 160–259; sequence QEGAVFQSRL…FGIFKRLKPI (100 aa). 267-295 provides a ligand contact to FAD; the sequence is VIVIGAGISGLAVAHQLQQFGMDVIVLEA. The tract at residues 860–890 is disordered; it reads DLSPNLSDSSPSSKKSEENSNSNTADSTELQ. The span at 861–882 shows a compositional bias: low complexity; it reads LSPNLSDSSPSSKKSEENSNSN. A Phosphoserine modification is found at Ser-866.

The protein belongs to the flavin monoamine oxidase family. Component of a complex that contains at least HDAC1/Rpd3, CoRest and Su(var)3-3/Hdm. FAD is required as a cofactor.

The protein localises to the nucleus. Its subcellular location is the chromosome. In terms of biological role, probable histone demethylase that specifically demethylates 'Lys-4' of histone H3, a specific tag for epigenetic transcriptional activation, thereby acting as a corepressor. Required for heterochromatic gene silencing. Acts by oxidizing the substrate by FAD to generate the corresponding imine that is subsequently hydrolyzed. Demethylates both mono- and tri-methylated 'Lys-4' of histone H3. May also demethylate 'Lys-9' of histone H3, Plays a role in the repression of neuronal genes. This Drosophila melanogaster (Fruit fly) protein is Possible lysine-specific histone demethylase 1 (Su(var)3-3).